The following is a 257-amino-acid chain: Deoxyribose-phosphate aldolase (257 aa).

The Proton donor/acceptor role is filled by Asp102. Lys166 (schiff-base intermediate with acetaldehyde) is an active-site residue. Lys198 acts as the Proton donor/acceptor in catalysis.

The protein belongs to the DeoC/FbaB aldolase family. DeoC type 2 subfamily.

Its subcellular location is the cytoplasm. It carries out the reaction 2-deoxy-D-ribose 5-phosphate = D-glyceraldehyde 3-phosphate + acetaldehyde. It participates in carbohydrate degradation; 2-deoxy-D-ribose 1-phosphate degradation; D-glyceraldehyde 3-phosphate and acetaldehyde from 2-deoxy-alpha-D-ribose 1-phosphate: step 2/2. Catalyzes a reversible aldol reaction between acetaldehyde and D-glyceraldehyde 3-phosphate to generate 2-deoxy-D-ribose 5-phosphate. The chain is Deoxyribose-phosphate aldolase from Shewanella sediminis (strain HAW-EB3).